Consider the following 353-residue polypeptide: 3'(2'),5'-bisphosphate nucleotidase 1 (353 aa).

The Proton acceptor role is filled by Asp46. Positions 71, 134, 136, and 137 each coordinate Mg(2+). The Proton acceptor role is filled by Thr139. Positions 139, 235, 259, 262, 276, and 288 each coordinate adenosine 3',5'-bisphosphate. Positions 235, 259, 262, 276, and 288 each coordinate AMP. Residue Asp288 coordinates Mg(2+).

It belongs to the inositol monophosphatase superfamily. Mg(2+) is required as a cofactor. In terms of tissue distribution, expressed in roots, leaves, stems, flowers and siliques.

The enzyme catalyses 3'-phosphoadenylyl sulfate + H2O = adenosine 5'-phosphosulfate + phosphate. It carries out the reaction adenosine 3',5'-bisphosphate + H2O = AMP + phosphate. The catalysed reaction is adenosine 2',5'-bisphosphate + H2O = AMP + phosphate. It catalyses the reaction 1D-myo-inositol 1,4-bisphosphate + H2O = 1D-myo-inositol 4-phosphate + phosphate. The enzyme catalyses 1D-myo-inositol 1,3,4-trisphosphate + H2O = 1D-myo-inositol 3,4-bisphosphate + phosphate. The protein operates within signal transduction; phosphatidylinositol signaling pathway. Its activity is regulated as follows. Inhibited non-competitively by Li(+) (IC(50)=0.20 mM) and Na(+) (IC(50)=200 mM). Phosphatase that converts adenosine 3'-phosphate 5'-phosphosulfate (PAPS) to adenosine 5'-phosphosulfate (APS) and 3'(2')-phosphoadenosine 5'-phosphate (PAP) to AMP. May regulate the flux of sulfur in the sulfur-activation pathway by converting PAPS to APS. May play a role in the biosynthesis of sulfate conjugates and RNA processing. Is also able to hydrolyze inositol 1,4-bisphosphate and inositol 1,3,4-trisphosphate. Could be considered as a negative regulator of abscisic acid (ABA)- and stress-responsive genes, through modulating the inositol 1,4,5-trisphosphate (IP3) turnover. Is also involved in salt tolerance. Acts as a suppressor of virus- and transgene-induced silencing. The chain is 3'(2'),5'-bisphosphate nucleotidase 1 from Arabidopsis thaliana (Mouse-ear cress).